The following is a 1205-amino-acid chain: Chromosome partition protein Smc (1205 aa).

ATP is bound at residue 32–39 (PNGSGKSN). 2 coiled-coil regions span residues 169–288 (KHRK…SIQH) and 330–499 (EELE…GLQR). The SMC hinge domain occupies 514-628 (GLFGSIAQLV…VNDLTEAMGL (115 aa)). Coiled coils occupy residues 661-771 (LEVT…AQET), 802-836 (AVRTAEERANAVRGRADSLRRAAAAEREARVRAQQ), and 979-1033 (DRVT…KDLL).

It belongs to the SMC family. In terms of assembly, homodimer.

It localises to the cytoplasm. Required for chromosome condensation and partitioning. The polypeptide is Chromosome partition protein Smc (Mycobacterium tuberculosis (strain ATCC 25618 / H37Rv)).